The primary structure comprises 245 residues: 4-hydroxy-tetrahydrodipicolinate reductase (245 aa).

NAD(+)-binding positions include 7–12 (GAKGKV), 75–77 (GTT), and 102–105 (APNF). The Proton donor/acceptor role is filled by His-132. (S)-2,3,4,5-tetrahydrodipicolinate is bound at residue His-133. The active-site Proton donor is Lys-136. 142-143 (GT) contributes to the (S)-2,3,4,5-tetrahydrodipicolinate binding site.

Belongs to the DapB family.

It is found in the cytoplasm. The catalysed reaction is (S)-2,3,4,5-tetrahydrodipicolinate + NAD(+) + H2O = (2S,4S)-4-hydroxy-2,3,4,5-tetrahydrodipicolinate + NADH + H(+). The enzyme catalyses (S)-2,3,4,5-tetrahydrodipicolinate + NADP(+) + H2O = (2S,4S)-4-hydroxy-2,3,4,5-tetrahydrodipicolinate + NADPH + H(+). The protein operates within amino-acid biosynthesis; L-lysine biosynthesis via DAP pathway; (S)-tetrahydrodipicolinate from L-aspartate: step 4/4. Catalyzes the conversion of 4-hydroxy-tetrahydrodipicolinate (HTPA) to tetrahydrodipicolinate. In Mycolicibacterium gilvum (strain PYR-GCK) (Mycobacterium gilvum (strain PYR-GCK)), this protein is 4-hydroxy-tetrahydrodipicolinate reductase.